Reading from the N-terminus, the 1881-residue chain is Nuclear pore membrane glycoprotein 210-like (1881 aa).

Residues 1-32 (MIAFGAPRRRSFGLLFSLAPHLFFLFLIGTLA) form the signal peptide. N-linked (GlcNAc...) asparagine glycans are attached at residues asparagine 80, asparagine 344, and asparagine 808. The region spanning 1078-1150 (FPPFRLIPEK…TIQTVNEDTG (73 aa)) is the BIG2 domain. Residue asparagine 1441 is glycosylated (N-linked (GlcNAc...) asparagine). Residues 1804–1824 (YQILLFTLFAVLASTSFIFLA) form a helical membrane-spanning segment.

It belongs to the NUP210 family. Expressed in testis.

It is found in the nucleus membrane. Its subcellular location is the nucleus. The protein localises to the nucleoplasm. The chain is Nuclear pore membrane glycoprotein 210-like (Nup210l) from Mus musculus (Mouse).